We begin with the raw amino-acid sequence, 89 residues long: Albumin-1 (89 aa).

A1 is a signal peptide. 3 cysteine pairs are disulfide-bonded: C4-C21, C8-C23, and C16-C33. A propeptide spanning residues 39–46 is cleaved from the precursor; sequence LSSVAKMI.

In terms of processing, the C-terminal glycine may be removed from A1b.

In terms of biological role, A1b binds to basic 7S globulin (BG) and stimulates its phosphorylation activity. The polypeptide is Albumin-1 (LEG) (Vigna radiata var. radiata (Mung bean)).